A 101-amino-acid chain; its full sequence is Large ribosomal subunit protein bL21 (101 aa).

Belongs to the bacterial ribosomal protein bL21 family. As to quaternary structure, part of the 50S ribosomal subunit. Contacts protein L20.

Functionally, this protein binds to 23S rRNA in the presence of protein L20. This Magnetococcus marinus (strain ATCC BAA-1437 / JCM 17883 / MC-1) protein is Large ribosomal subunit protein bL21.